The sequence spans 223 residues: MKRN2 opposite strand protein (223 aa).

This is MKRN2 opposite strand protein (MKRN2OS) from Homo sapiens (Human).